Reading from the N-terminus, the 366-residue chain is D-alanine--D-alanine ligase (366 aa).

In terms of domain architecture, ATP-grasp spans Lys-146 to Glu-352. Glu-179 to Glu-234 contributes to the ATP binding site. 3 residues coordinate Mg(2+): Asp-305, Glu-319, and Asn-321.

The protein belongs to the D-alanine--D-alanine ligase family. The cofactor is Mg(2+). It depends on Mn(2+) as a cofactor.

It is found in the cytoplasm. It catalyses the reaction 2 D-alanine + ATP = D-alanyl-D-alanine + ADP + phosphate + H(+). It participates in cell wall biogenesis; peptidoglycan biosynthesis. Cell wall formation. This is D-alanine--D-alanine ligase from Chloroherpeton thalassium (strain ATCC 35110 / GB-78).